Here is an 842-residue protein sequence, read N- to C-terminus: Glycogen phosphorylase, muscle form (842 aa).

An N-acetylserine modification is found at Ser2. Ser15 bears the Phosphoserine; by PHK; in form phosphorylase A mark. AMP is bound by residues Asp43 and Tyr76. Residues Tyr204 and Tyr227 each carry the phosphotyrosine modification. Residue 310–319 (RRFKSSKFGS) participates in AMP binding. Ser430 is subject to Phosphoserine. Phosphotyrosine is present on Tyr473. Phosphoserine is present on Ser514. Lys681 carries the N6-(pyridoxal phosphate)lysine modification. Residues Ser747 and Ser748 each carry the phosphoserine modification.

It belongs to the glycogen phosphorylase family. Homodimer. Homotetramer; to form the enzymatically active phosphorylase A. It depends on pyridoxal 5'-phosphate as a cofactor. Post-translationally, phosphorylation of Ser-15 converts phosphorylase B (unphosphorylated) to phosphorylase A.

The enzyme catalyses [(1-&gt;4)-alpha-D-glucosyl](n) + phosphate = [(1-&gt;4)-alpha-D-glucosyl](n-1) + alpha-D-glucose 1-phosphate. With respect to regulation, allosterically regulated through the non-covalent binding of metabolites, being activated by AMP and inhibited by ATP, ADP, and glucose-6-phosphate. The activity is also controlled by post-translational modifications including phosphorylation. In terms of biological role, allosteric enzyme that catalyzes the rate-limiting step in glycogen catabolism, the phosphorolytic cleavage of glycogen to produce glucose-1-phosphate, and plays a central role in maintaining cellular and organismal glucose homeostasis. The chain is Glycogen phosphorylase, muscle form from Mus musculus (Mouse).